We begin with the raw amino-acid sequence, 550 residues long: Hydroxylamine reductase (550 aa).

The [2Fe-2S] cluster site is built by Cys3, Cys6, Cys18, and Cys25. Hybrid [4Fe-2O-2S] cluster-binding residues include His249, Glu273, Cys317, Cys405, Cys433, Cys458, Glu492, and Lys494. A Cysteine persulfide modification is found at Cys405.

It belongs to the HCP family. The cofactor is [2Fe-2S] cluster. Requires hybrid [4Fe-2O-2S] cluster as cofactor.

The protein localises to the cytoplasm. The catalysed reaction is A + NH4(+) + H2O = hydroxylamine + AH2 + H(+). Catalyzes the reduction of hydroxylamine to form NH(3) and H(2)O. The protein is Hydroxylamine reductase of Salmonella agona (strain SL483).